Consider the following 117-residue polypeptide: Ribosome-binding factor A (117 aa).

This sequence belongs to the RbfA family. Monomer. Binds 30S ribosomal subunits, but not 50S ribosomal subunits or 70S ribosomes.

It localises to the cytoplasm. Its function is as follows. One of several proteins that assist in the late maturation steps of the functional core of the 30S ribosomal subunit. Associates with free 30S ribosomal subunits (but not with 30S subunits that are part of 70S ribosomes or polysomes). Required for efficient processing of 16S rRNA. May interact with the 5'-terminal helix region of 16S rRNA. The polypeptide is Ribosome-binding factor A (Leuconostoc citreum (strain KM20)).